The following is a 300-amino-acid chain: 4-hydroxy-tetrahydrodipicolinate synthase (300 aa).

A pyruvate-binding site is contributed by Thr55. The active-site Proton donor/acceptor is the Tyr143. Lys171 (schiff-base intermediate with substrate) is an active-site residue. Pyruvate is bound at residue Ile211.

Belongs to the DapA family. In terms of assembly, homotetramer; dimer of dimers.

Its subcellular location is the cytoplasm. It catalyses the reaction L-aspartate 4-semialdehyde + pyruvate = (2S,4S)-4-hydroxy-2,3,4,5-tetrahydrodipicolinate + H2O + H(+). Its pathway is amino-acid biosynthesis; L-lysine biosynthesis via DAP pathway; (S)-tetrahydrodipicolinate from L-aspartate: step 3/4. Catalyzes the condensation of (S)-aspartate-beta-semialdehyde [(S)-ASA] and pyruvate to 4-hydroxy-tetrahydrodipicolinate (HTPA). In Mycobacterium leprae (strain Br4923), this protein is 4-hydroxy-tetrahydrodipicolinate synthase.